A 569-amino-acid polypeptide reads, in one-letter code: Urease subunit beta (569 aa).

One can recognise a Urease domain in the interval 131 to 569 (GGIDTHIHFI…VSLAQLFSIF (439 aa)). Residues histidine 136, histidine 138, and lysine 219 each contribute to the Ni(2+) site. At lysine 219 the chain carries N6-carboxylysine. Histidine 221 is a substrate binding site. Residues histidine 248 and histidine 274 each coordinate Ni(2+). The active-site Proton donor is the histidine 322. Aspartate 362 contributes to the Ni(2+) binding site.

This sequence belongs to the metallo-dependent hydrolases superfamily. Urease alpha subunit family. As to quaternary structure, heterohexamer of 3 UreA (alpha) and 3 UreB (beta) subunits. It depends on Ni cation as a cofactor. Post-translationally, carboxylation allows a single lysine to coordinate two nickel ions.

The protein localises to the cytoplasm. The enzyme catalyses urea + 2 H2O + H(+) = hydrogencarbonate + 2 NH4(+). Its pathway is nitrogen metabolism; urea degradation; CO(2) and NH(3) from urea (urease route): step 1/1. The protein is Urease subunit beta of Helicobacter pylori (strain Shi470).